The primary structure comprises 92 residues: MPRSLKKGPFIDLHLLKKVEKAVESGDKKPVKTWSRRSTIFPNMIGLTIAVHNGRQHVPVYVSDEMVGHKLGEFAPTRTYRGHAADKKAKKK.

This sequence belongs to the universal ribosomal protein uS19 family.

In terms of biological role, protein S19 forms a complex with S13 that binds strongly to the 16S ribosomal RNA. In Proteus mirabilis (strain HI4320), this protein is Small ribosomal subunit protein uS19.